The following is a 154-amino-acid chain: Ribosomal RNA-processing protein 14-N (154 aa).

The interval 36–154 is disordered; sequence WKQKKSTLEE…KHKASPRAGF (119 aa). Ser-80 carries the post-translational modification Phosphoserine. Thr-83 carries the phosphothreonine modification. Residues 105–133 are compositionally biased toward basic and acidic residues; the sequence is QDLREKRKAGDLNQKRQNKRPVENEKDSQ. Residues 140–154 are compositionally biased toward basic residues; sequence KVQKKKHKASPRAGF.

Belongs to the SURF6 family.

It localises to the nucleus. The protein resides in the nucleolus. Its function is as follows. Involved in ribosome biogenesis and cell polarity. Required for the synthesis of both 40S and 60S ribosomal subunits and may also play some direct role in correct positioning of the mitotic spindle during mitosis. The sequence is that of Ribosomal RNA-processing protein 14-N (rrp14n) from Schizosaccharomyces pombe (strain 972 / ATCC 24843) (Fission yeast).